Consider the following 266-residue polypeptide: Phosphatidylglycerol--prolipoprotein diacylglyceryl transferase (266 aa).

A run of 4 helical transmembrane segments spans residues 14–34 (FGPLQIHWYGLMYLAGFAFFW), 55–75 (FLFYGALGVILGGRIGYILFY), 91–111 (WKGGMAFHGGLIGVMVAMWLF), and 117–137 (VSMFVVADFVAPMVPVGLFFG). R138 contributes to the a 1,2-diacyl-sn-glycero-3-phospho-(1'-sn-glycerol) binding site. A run of 3 helical transmembrane segments spans residues 172 to 192 (YPTQLLEALLEGIVLFIILMF), 201 to 221 (GAASGLFIGLYGLFRFYVEFF), and 235 to 255 (WVTMGQLLSLPMILIGFALVV).

This sequence belongs to the Lgt family.

It localises to the cell inner membrane. It catalyses the reaction L-cysteinyl-[prolipoprotein] + a 1,2-diacyl-sn-glycero-3-phospho-(1'-sn-glycerol) = an S-1,2-diacyl-sn-glyceryl-L-cysteinyl-[prolipoprotein] + sn-glycerol 1-phosphate + H(+). The protein operates within protein modification; lipoprotein biosynthesis (diacylglyceryl transfer). In terms of biological role, catalyzes the transfer of the diacylglyceryl group from phosphatidylglycerol to the sulfhydryl group of the N-terminal cysteine of a prolipoprotein, the first step in the formation of mature lipoproteins. The polypeptide is Phosphatidylglycerol--prolipoprotein diacylglyceryl transferase (Hydrogenovibrio crunogenus (strain DSM 25203 / XCL-2) (Thiomicrospira crunogena)).